The sequence spans 705 residues: Polyribonucleotide nucleotidyltransferase (705 aa).

Asp-486 and Asp-492 together coordinate Mg(2+). The region spanning 553 to 612 is the KH domain; the sequence is PRIHTIRINPDKIKDVIGKGGSVIRALTEETGTTIEIEDDGTVKIAATDGEKAKFAIRRI. One can recognise an S1 motif domain in the interval 622–690; that stretch reads GRIYQGKVTR…RQGRVRLSIK (69 aa).

The protein belongs to the polyribonucleotide nucleotidyltransferase family. In terms of assembly, component of the RNA degradosome, which is a multiprotein complex involved in RNA processing and mRNA degradation. Requires Mg(2+) as cofactor.

It localises to the cytoplasm. The catalysed reaction is RNA(n+1) + phosphate = RNA(n) + a ribonucleoside 5'-diphosphate. Functionally, involved in mRNA degradation. Catalyzes the phosphorolysis of single-stranded polyribonucleotides processively in the 3'- to 5'-direction. The chain is Polyribonucleotide nucleotidyltransferase from Serratia proteamaculans (strain 568).